The sequence spans 685 residues: MAEWLLSASRQRRVKAMTAAAGSAGRAAVPFLLCALLAPGGAYVLDDSDGLGREFDGIGAVSGGGATSRLLVNYPEPYRSQILDYLFKPNFGASLHILKVEIGGDGQTTDGTEPSHMHYALDENYFRGYEWWLMKEAKKRNPNITLIGLPWSFPGWLGKGFDWPYVNLQLTAYYVVTWIVGAKRYHDLDIDYIGIWNERSYNANYIKILRKMLNSQGLQRVKIIASDNLWESISAAMLLDAELFKVVDVIGAHYPGTHSVKDARLTGKKLWSSEDFSTLNSDTGAGCWGRILNQNYVNGYMTSTIAWNLVASYYEQLPYGRCGLMTAQEPWSGHYVVESPVWVSAHTTQFTQPGWYYLKTVGHLEKGGSYVALTDGLGNLTIIIETMSHKHSKCIRPFLPYFNVSQQFATFVLKGSFSEIPELQVWYTKLGKTSERFLFKQLDSLWLLDSNGSFTLKLQEDELFTLTTLTTGRKGSYLPPPKSQRFPSTYKDDFNVDYPFFSEAPNFADQTGVFEYFTNMEDPGEHHFTLRQVLNQRPITWAADASNTISIIGDYNWTNLTIKCDVYIETPDTGGVFIAGRVNKGGILIRSARGIFFWIFANGSYRVTGDLAGWIIYALGHVEVTAKTWYTLTLTIKGRFASGMLNDKSLWTDIPVNFPKNGWAAIGTHSFEFAQFDNFHVEATR.

An N-terminal signal peptide occupies residues 1–42; sequence MAEWLLSASRQRRVKAMTAAAGSAGRAAVPFLLCALLAPGGA. T109 contributes to the substrate binding site. N-linked (GlcNAc...) asparagine glycosylation is present at N143. W151 and N197 together coordinate substrate. The active-site Proton donor/acceptor is the E198. Catalysis depends on E274, which acts as the Nucleophile. C287 and C394 are disulfide-bonded. N379 is a glycosylation site (N-linked (GlcNAc...) asparagine). R396 serves as a coordination point for substrate. N403, N451, N556, N559, and N602 each carry an N-linked (GlcNAc...) asparagine glycan.

This sequence belongs to the glycosyl hydrolase 59 family.

The protein localises to the lysosome. It carries out the reaction a beta-D-galactosyl-(1&lt;-&gt;1')-N-acylsphing-4-enine + H2O = an N-acylsphing-4-enine + D-galactose. It catalyses the reaction beta-D-galactosyl-(1&lt;-&gt;1)-sphing-4-enine + H2O = sphing-4-enine + D-galactose. The catalysed reaction is a D-galactosylceramide + H2O = an N-acyl-sphingoid base + D-galactose. Its function is as follows. Hydrolyzes the galactose ester bonds of glycolipids such as galactosylceramide and galactosylsphingosine. Enzyme with very low activity responsible for the lysosomal catabolism of galactosylceramide, a major lipid in myelin, kidney and epithelial cells of small intestine and colon. The protein is Galactocerebrosidase of Macaca mulatta (Rhesus macaque).